The following is a 619-amino-acid chain: Dihydroxy-acid dehydratase (619 aa).

Asp-81 is a binding site for Mg(2+). Cys-122 contributes to the [2Fe-2S] cluster binding site. Mg(2+) contacts are provided by Asp-123 and Lys-124. Residue Lys-124 is modified to N6-carboxylysine. Cys-201 is a binding site for [2Fe-2S] cluster. Glu-496 is a Mg(2+) binding site. Ser-522 (proton acceptor) is an active-site residue.

Belongs to the IlvD/Edd family. In terms of assembly, homodimer. It depends on [2Fe-2S] cluster as a cofactor. Requires Mg(2+) as cofactor.

It catalyses the reaction (2R)-2,3-dihydroxy-3-methylbutanoate = 3-methyl-2-oxobutanoate + H2O. The enzyme catalyses (2R,3R)-2,3-dihydroxy-3-methylpentanoate = (S)-3-methyl-2-oxopentanoate + H2O. Its pathway is amino-acid biosynthesis; L-isoleucine biosynthesis; L-isoleucine from 2-oxobutanoate: step 3/4. It functions in the pathway amino-acid biosynthesis; L-valine biosynthesis; L-valine from pyruvate: step 3/4. Functionally, functions in the biosynthesis of branched-chain amino acids. Catalyzes the dehydration of (2R,3R)-2,3-dihydroxy-3-methylpentanoate (2,3-dihydroxy-3-methylvalerate) into 2-oxo-3-methylpentanoate (2-oxo-3-methylvalerate) and of (2R)-2,3-dihydroxy-3-methylbutanoate (2,3-dihydroxyisovalerate) into 2-oxo-3-methylbutanoate (2-oxoisovalerate), the penultimate precursor to L-isoleucine and L-valine, respectively. In Paracidovorax citrulli (strain AAC00-1) (Acidovorax citrulli), this protein is Dihydroxy-acid dehydratase.